A 256-amino-acid polypeptide reads, in one-letter code: Imidazole glycerol phosphate synthase subunit HisF (256 aa).

Catalysis depends on residues Asp-11 and Asp-130.

It belongs to the HisA/HisF family. Heterodimer of HisH and HisF.

It localises to the cytoplasm. The catalysed reaction is 5-[(5-phospho-1-deoxy-D-ribulos-1-ylimino)methylamino]-1-(5-phospho-beta-D-ribosyl)imidazole-4-carboxamide + L-glutamine = D-erythro-1-(imidazol-4-yl)glycerol 3-phosphate + 5-amino-1-(5-phospho-beta-D-ribosyl)imidazole-4-carboxamide + L-glutamate + H(+). The protein operates within amino-acid biosynthesis; L-histidine biosynthesis; L-histidine from 5-phospho-alpha-D-ribose 1-diphosphate: step 5/9. IGPS catalyzes the conversion of PRFAR and glutamine to IGP, AICAR and glutamate. The HisF subunit catalyzes the cyclization activity that produces IGP and AICAR from PRFAR using the ammonia provided by the HisH subunit. This chain is Imidazole glycerol phosphate synthase subunit HisF, found in Methylocella silvestris (strain DSM 15510 / CIP 108128 / LMG 27833 / NCIMB 13906 / BL2).